Here is a 238-residue protein sequence, read N- to C-terminus: Ribonuclease M (238 aa).

Disulfide bonds link Cys5–Cys22, Cys13–Cys58, Cys21–Cys126, Cys66–Cys118, and Cys191–Cys225. His51 is a catalytic residue. Asn74 carries an N-linked (GlcNAc...) asparagine glycan. Active-site residues include Glu111 and His115.

Belongs to the RNase T2 family.

It catalyses the reaction a ribonucleotidyl-ribonucleotide-RNA + H2O = a 3'-end 3'-phospho-ribonucleotide-RNA + a 5'-end dephospho-ribonucleoside-RNA + H(+). Its function is as follows. This is a base non-specific and adenylic acid preferential ribonuclease. The sequence is that of Ribonuclease M from Aspergillus phoenicis (Aspergillus saitoi).